The sequence spans 95 residues: uncharacterized protein (95 aa).

Composition is skewed to basic and acidic residues over residues 1–28 (MRRA…KERC) and 41–53 (DERV…KGRP). Residues 1–73 (MRRAEVKRSA…RTSRAGSSWQ (73 aa)) form a disordered region.

This is an uncharacterized protein from Homo sapiens (Human).